We begin with the raw amino-acid sequence, 693 residues long: Elongation factor G (693 aa).

Residues 8–282 form the tr-type G domain; the sequence is KNTRNIGIMA…AAIEYLPSPL (275 aa). GTP contacts are provided by residues 17–24, 81–85, and 135–138; these read AHIDAGKT, DTPGH, and NKMD.

The protein belongs to the TRAFAC class translation factor GTPase superfamily. Classic translation factor GTPase family. EF-G/EF-2 subfamily.

The protein resides in the cytoplasm. Catalyzes the GTP-dependent ribosomal translocation step during translation elongation. During this step, the ribosome changes from the pre-translocational (PRE) to the post-translocational (POST) state as the newly formed A-site-bound peptidyl-tRNA and P-site-bound deacylated tRNA move to the P and E sites, respectively. Catalyzes the coordinated movement of the two tRNA molecules, the mRNA and conformational changes in the ribosome. This is Elongation factor G from Macrococcus caseolyticus (strain JCSC5402) (Macrococcoides caseolyticum).